Here is a 163-residue protein sequence, read N- to C-terminus: D-aminoacyl-tRNA deacylase (163 aa).

A Gly-cisPro motif, important for rejection of L-amino acids motif is present at residues Gly141–Pro142.

It belongs to the DTD family. As to quaternary structure, homodimer.

It is found in the cytoplasm. It carries out the reaction glycyl-tRNA(Ala) + H2O = tRNA(Ala) + glycine + H(+). The catalysed reaction is a D-aminoacyl-tRNA + H2O = a tRNA + a D-alpha-amino acid + H(+). An aminoacyl-tRNA editing enzyme that deacylates mischarged D-aminoacyl-tRNAs. Also deacylates mischarged glycyl-tRNA(Ala), protecting cells against glycine mischarging by AlaRS. Acts via tRNA-based rather than protein-based catalysis; rejects L-amino acids rather than detecting D-amino acids in the active site. By recycling D-aminoacyl-tRNA to D-amino acids and free tRNA molecules, this enzyme counteracts the toxicity associated with the formation of D-aminoacyl-tRNA entities in vivo and helps enforce protein L-homochirality. The protein is D-aminoacyl-tRNA deacylase of Neisseria meningitidis serogroup B (strain ATCC BAA-335 / MC58).